We begin with the raw amino-acid sequence, 179 residues long: Large ribosomal subunit protein uL5 (179 aa).

This sequence belongs to the universal ribosomal protein uL5 family. As to quaternary structure, part of the 50S ribosomal subunit; part of the 5S rRNA/L5/L18/L25 subcomplex. Contacts the 5S rRNA and the P site tRNA. Forms a bridge to the 30S subunit in the 70S ribosome.

Its function is as follows. This is one of the proteins that bind and probably mediate the attachment of the 5S RNA into the large ribosomal subunit, where it forms part of the central protuberance. In the 70S ribosome it contacts protein S13 of the 30S subunit (bridge B1b), connecting the 2 subunits; this bridge is implicated in subunit movement. Contacts the P site tRNA; the 5S rRNA and some of its associated proteins might help stabilize positioning of ribosome-bound tRNAs. The protein is Large ribosomal subunit protein uL5 of Bordetella avium (strain 197N).